The chain runs to 158 residues: NAD(P)H-quinone oxidoreductase subunit J, chloroplastic (158 aa).

The protein belongs to the complex I 30 kDa subunit family. NDH is composed of at least 16 different subunits, 5 of which are encoded in the nucleus.

The protein resides in the plastid. It is found in the chloroplast thylakoid membrane. It carries out the reaction a plastoquinone + NADH + (n+1) H(+)(in) = a plastoquinol + NAD(+) + n H(+)(out). The enzyme catalyses a plastoquinone + NADPH + (n+1) H(+)(in) = a plastoquinol + NADP(+) + n H(+)(out). NDH shuttles electrons from NAD(P)H:plastoquinone, via FMN and iron-sulfur (Fe-S) centers, to quinones in the photosynthetic chain and possibly in a chloroplast respiratory chain. The immediate electron acceptor for the enzyme in this species is believed to be plastoquinone. Couples the redox reaction to proton translocation, and thus conserves the redox energy in a proton gradient. The chain is NAD(P)H-quinone oxidoreductase subunit J, chloroplastic from Lemna minor (Common duckweed).